The sequence spans 164 residues: Peptidyl-prolyl cis-trans isomerase A (164 aa).

At Met-1 the chain carries N-acetylmethionine. Val-2 is subject to N-acetylvaline; in Peptidyl-prolyl cis-trans isomerase A, N-terminally processed. In terms of domain architecture, PPIase cyclophilin-type spans 7-163 (FFDIAVDGEP…KKITIANCGQ (157 aa)). Residue Lys-28 is modified to N6-acetyllysine; alternate. Lys-28 participates in a covalent cross-link: Glycyl lysine isopeptide (Lys-Gly) (interchain with G-Cter in SUMO2); alternate. Lys-28 is covalently cross-linked (Glycyl lysine isopeptide (Lys-Gly) (interchain with G-Cter in ubiquitin); alternate). Lys-44 and Lys-76 each carry N6-acetyllysine. The residue at position 77 (Ser-77) is a Phosphoserine. N6-acetyllysine; alternate is present on Lys-82. A Glycyl lysine isopeptide (Lys-Gly) (interchain with G-Cter in SUMO2); alternate cross-link involves residue Lys-82. Thr-93 bears the Phosphothreonine mark. An N-linked (GlcNAc...) asparagine glycan is attached at Asn-108. N6-acetyllysine occurs at positions 125 and 133.

This sequence belongs to the cyclophilin-type PPIase family. PPIase A subfamily. As to quaternary structure, interacts with protein phosphatase PPP3CA/calcineurin A. Interacts with isoform 2 of BSG/CD147. Interacts with FOXO1; the interaction promotes FOXO1 dephosphorylation, nuclear accumulation and transcriptional activity. Interacts with integrin ITGA2B:ITGB3; the interaction is ROS and peptidyl-prolyl cis-trans isomerase (PPIase) activity-dependent and is increased in the presence of thrombin. Interacts with MAP3K5. Interacts with TARDBP; the interaction is dependent on the RNA-binding activity of TARDBP and the PPIase activity of PPIA/CYPA and the acetylation of PPIA/CYPA at Lys-125 favors the interaction. Interacts with HNRNPA1, HNRNPA2B1, HNRNPC, RBMX, HNRNPK and HNRNPM. Acetylation at Lys-125 markedly inhibits catalysis of cis to trans isomerization. PPIA acetylation also antagonizes the immunosuppressive effects of cyclosporine by inhibiting the sequential steps of cyclosporine binding and calcineurin inhibition. Acetylation at Lys-125 favors the interaction with TARDBP.

It localises to the cytoplasm. Its subcellular location is the secreted. The protein localises to the nucleus. The enzyme catalyses [protein]-peptidylproline (omega=180) = [protein]-peptidylproline (omega=0). Its activity is regulated as follows. Binds cyclosporin A (CsA). CsA mediates some of its effects via an inhibitory action on PPIase. Functionally, catalyzes the cis-trans isomerization of proline imidic peptide bonds in oligopeptides. Exerts a strong chemotactic effect on leukocytes partly through activation of one of its membrane receptors BSG/CD147, initiating a signaling cascade that culminates in MAPK/ERK activation. Activates endothelial cells (ECs) in a proinflammatory manner by stimulating activation of NF-kappa-B and ERK, JNK and p38 MAP-kinases and by inducing expression of adhesion molecules including SELE and VCAM1. Induces apoptosis in ECs by promoting the FOXO1-dependent expression of CCL2 and BCL2L11 which are involved in EC chemotaxis and apoptosis. In response to oxidative stress, initiates proapoptotic and antiapoptotic signaling in ECs via activation of NF-kappa-B and AKT1 and up-regulation of antiapoptotic protein BCL2. Negatively regulates MAP3K5/ASK1 kinase activity, autophosphorylation and oxidative stress-induced apoptosis mediated by MAP3K5/ASK1. Necessary for the assembly of TARDBP in heterogeneous nuclear ribonucleoprotein (hnRNP) complexes and regulates TARDBP binding to RNA UG repeats and TARDBP-dependent expression of HDAC6, ATG7 and VCP which are involved in clearance of protein aggregates. Plays an important role in platelet activation and aggregation. Regulates calcium mobilization and integrin ITGA2B:ITGB3 bidirectional signaling via increased ROS production as well as by facilitating the interaction between integrin and the cell cytoskeleton. Binds heparan sulfate glycosaminoglycans. The sequence is that of Peptidyl-prolyl cis-trans isomerase A (PPIA) from Oryctolagus cuniculus (Rabbit).